Here is a 270-residue protein sequence, read N- to C-terminus: tRNA (guanine-N(1)-)-methyltransferase (270 aa).

S-adenosyl-L-methionine contacts are provided by residues Gly-113 and 133 to 138 (IGDYVL). Residues 251-270 (APTEGTGLIHHRDVEGPGEG) are disordered. Basic and acidic residues predominate over residues 260-270 (HHRDVEGPGEG).

It belongs to the RNA methyltransferase TrmD family. Homodimer.

Its subcellular location is the cytoplasm. The enzyme catalyses guanosine(37) in tRNA + S-adenosyl-L-methionine = N(1)-methylguanosine(37) in tRNA + S-adenosyl-L-homocysteine + H(+). Functionally, specifically methylates guanosine-37 in various tRNAs. The protein is tRNA (guanine-N(1)-)-methyltransferase of Frankia casuarinae (strain DSM 45818 / CECT 9043 / HFP020203 / CcI3).